A 312-amino-acid polypeptide reads, in one-letter code: Coproporphyrin III ferrochelatase (312 aa).

Residues Y13, R30, 46-47 (RY), S54, and Y125 each bind Fe-coproporphyrin III. Fe(2+) contacts are provided by H183 and E264.

Belongs to the ferrochelatase family.

The protein localises to the cytoplasm. It carries out the reaction Fe-coproporphyrin III + 2 H(+) = coproporphyrin III + Fe(2+). It participates in porphyrin-containing compound metabolism; protoheme biosynthesis. Functionally, involved in coproporphyrin-dependent heme b biosynthesis. Catalyzes the insertion of ferrous iron into coproporphyrin III to form Fe-coproporphyrin III. In Bacillus pumilus (strain SAFR-032), this protein is Coproporphyrin III ferrochelatase.